Here is a 394-residue protein sequence, read N- to C-terminus: Phosphoglycerate kinase (394 aa).

Substrate contacts are provided by residues 21 to 23 (DFN), R36, 59 to 62 (HLGR), R118, and R151. S183 bears the Phosphoserine mark. Positions 201 and 292 each coordinate ATP. T299 bears the Phosphothreonine mark. ATP-binding positions include E323 and 350–353 (GGDS).

It belongs to the phosphoglycerate kinase family. Monomer.

Its subcellular location is the cytoplasm. It carries out the reaction (2R)-3-phosphoglycerate + ATP = (2R)-3-phospho-glyceroyl phosphate + ADP. It functions in the pathway carbohydrate degradation; glycolysis; pyruvate from D-glyceraldehyde 3-phosphate: step 2/5. The protein is Phosphoglycerate kinase of Bacillus thuringiensis (strain Al Hakam).